The chain runs to 318 residues: Type II methyltransferase M.HaeII (318 aa).

An SAM-dependent MTase C5-type domain is found at 4–304 (YKTIDLFAGI…GSMINSLNMA (301 aa)). Residue Cys73 is part of the active site.

This sequence belongs to the class I-like SAM-binding methyltransferase superfamily. C5-methyltransferase family.

It catalyses the reaction a 2'-deoxycytidine in DNA + S-adenosyl-L-methionine = a 5-methyl-2'-deoxycytidine in DNA + S-adenosyl-L-homocysteine + H(+). A methylase, recognizes the double-stranded sequence 5'-RGCGCY-3', methylates C-? on both strands, and protects the DNA from cleavage by the HaeII endonuclease. The polypeptide is Type II methyltransferase M.HaeII (haeIIM) (Haemophilus aegyptius).